Consider the following 60-residue polypeptide: Naniproin (60 aa).

4 disulfide bridges follow: cysteine 3–cysteine 21, cysteine 14–cysteine 38, cysteine 42–cysteine 53, and cysteine 54–cysteine 59.

The protein belongs to the three-finger toxin family. Short-chain subfamily. Type IA cytotoxin sub-subfamily. Monomer in solution; Homodimer and oligomer in the presence of negatively charged lipids forming a pore with a size ranging between 20 and 30 angstroms. Expressed by the venom gland.

The protein resides in the secreted. It is found in the target cell membrane. Its function is as follows. Basic protein that binds to cell membrane and depolarizes cardiomyocytes. This cytotoxin also possesses lytic activity on many other cells, including red blood cells. Interaction with sulfatides in the cell membrane induces pore formation and cell internalization and is responsible for cytotoxicity in cardiomyocytes. It targets the mitochondrial membrane and induces mitochondrial swelling and fragmentation. Inhibits protein kinases C. It binds to the integrin alpha-V/beta-3 with a moderate affinity. The polypeptide is Naniproin (Naja nigricollis (Black-necked spitting cobra)).